Reading from the N-terminus, the 770-residue chain is Protein PAT1 homolog 1 (770 aa).

A disordered region spans residues 1 to 42 (MFRYESLEDCPLDEDEDAFQGLGEEDEEIDQFNDDTFGSGAV). The interval 1-84 (MFRYESLEDC…EMDLLGDHEE (84 aa)) is region A; interaction with DDX6/RCK. An involved in nuclear foci localization region spans residues 1–397 (MFRYESLEDC…HQSSHQDHLR (397 aa)). Over residues 7 to 33 (LEDCPLDEDEDAFQGLGEEDEEIDQFN) the composition is skewed to acidic residues. The segment at 85–388 (NLAERLSKMV…LNGTGDRGGH (304 aa)) is region N; interaction with decapping machinery. The Nuclear export signal signature appears at 86–95 (LAERLSKMVI). The tract at residues 155–195 (PQRPLQGPEDDRDLSERALPRRSTSPIIGSPPVRAVPIGTP) is disordered. Residue Ser177 is modified to Phosphoserine. At Thr178 the chain carries Phosphothreonine. A phosphoserine mark is found at Ser179 and Ser184. Position 194 is a phosphothreonine (Thr194). Asymmetric dimethylarginine occurs at positions 217, 223, and 263. The interval 223-397 (RYPAPYGERI…HQSSHQDHLR (175 aa)) is involved in RNA-binding. Ser278 bears the Phosphoserine mark. Arg284 is subject to Asymmetric dimethylarginine. Disordered regions lie at residues 319-340 (FSAP…GPHL) and 376-396 (HRNL…QDHL). The span at 321–337 (APPPATPPPQQHPPGPG) shows a compositional bias: pro residues. Omega-N-methylarginine is present on Arg385. Residues 385 to 396 (RGGHQSSHQDHL) show a composition bias toward basic and acidic residues. The interval 389-448 (QSSHQDHLRKDPYANLMLQREKDWVSKIQMMQLQSTDPYLDDFYYQNYFEKLEKLSAAEE) is region H. The tract at residues 398-770 (KDPYANLMLQ…TKLQLVQGIR (373 aa)) is involved in nuclear speckle localization. The segment at 449–770 (IQGDGPKKER…TKLQLVQGIR (322 aa)) is region C.

This sequence belongs to the PAT1 family. Interacts (via region A) with DDX6/RCK. Interacts (via region H and region C) with LSM1 and LSM4. Interacts (via region N) with DCP1A, DCP2, EDC3, EDC4 and XRN1. Interacts with the CCR4-NOT complex. Interacts with the Lsm-containing SMN-Sm protein complex. Interacts with EIF4ENIF1/4E-T.

It is found in the cytoplasm. The protein localises to the P-body. Its subcellular location is the nucleus. The protein resides in the PML body. It localises to the nucleus speckle. RNA-binding protein involved in deadenylation-dependent decapping of mRNAs, leading to the degradation of mRNAs. Acts as a scaffold protein that connects deadenylation and decapping machinery. Required for cytoplasmic mRNA processing body (P-body) assembly. In Mus musculus (Mouse), this protein is Protein PAT1 homolog 1 (Patl1).